The sequence spans 575 residues: Proline--tRNA ligase 1 (575 aa).

Belongs to the class-II aminoacyl-tRNA synthetase family. ProS type 1 subfamily. In terms of assembly, homodimer.

It localises to the cytoplasm. It catalyses the reaction tRNA(Pro) + L-proline + ATP = L-prolyl-tRNA(Pro) + AMP + diphosphate. In terms of biological role, catalyzes the attachment of proline to tRNA(Pro) in a two-step reaction: proline is first activated by ATP to form Pro-AMP and then transferred to the acceptor end of tRNA(Pro). As ProRS can inadvertently accommodate and process non-cognate amino acids such as alanine and cysteine, to avoid such errors it has two additional distinct editing activities against alanine. One activity is designated as 'pretransfer' editing and involves the tRNA(Pro)-independent hydrolysis of activated Ala-AMP. The other activity is designated 'posttransfer' editing and involves deacylation of mischarged Ala-tRNA(Pro). The misacylated Cys-tRNA(Pro) is not edited by ProRS. This chain is Proline--tRNA ligase 1, found in Anaeromyxobacter dehalogenans (strain 2CP-C).